The sequence spans 849 residues: Formin-like protein 4 (849 aa).

An N-terminal signal peptide occupies residues 1–22 (MPPTLALLLFLALSAVAAVGGA). The tract at residues 36-104 (IEWTPPPSTA…RARGGGGGGT (69 aa)) is disordered. Over residues 38–52 (WTPPPSTASPSPPSP) the composition is skewed to pro residues. Low complexity predominate over residues 53–64 (DFSSDPSTPATP). The chain crosses the membrane as a helical span at residues 109 to 129 (IVVASAAAAAVLALLAFAAAF). Positions 185–194 (ARRGMCRDVD) are enriched in basic and acidic residues. The tract at residues 185-364 (ARRGMCRDVD…PEPPTGPVSA (180 aa)) is disordered. Positions 234 to 246 (GSGGGGGGEGGGT) are enriched in gly residues. Residues 247-279 (WSEASASSPRTTTASRRSLPSLTSDFFPTTPAA) show a composition bias toward low complexity. Pro residues-rich tracts occupy residues 280–297 (APVP…PPAP), 324–339 (PSNP…PPPS), and 346–360 (PKPP…PPTG). Positions 406–823 (EAAGDEPRPK…SARSFRISAA (418 aa)) constitute an FH2 domain.

This sequence belongs to the formin-like family. Class-I subfamily.

Its subcellular location is the membrane. In Oryza sativa subsp. japonica (Rice), this protein is Formin-like protein 4 (FH4).